The chain runs to 463 residues: MPSCTTPTYGVSTQLESQSSESPSRSSVMTPTSLDGDNSPRKRFPIIDNVPADRWPSTRRDGWSSVRAPPPARLTLSTNNRHIMSPISSAYSQTPNSLLSPAMFNPKSRSIFSPTLPATPMSYGKSSMDKSLFSPTATEPIEVEATVEYLADLVKEKKHLTLFPHMFSNVERLLDDEIGRVRVALFQTEFPRVELPEPAGDMISITEKIYVPKNEYPDYNFVGRILGPRGMTAKQLEQDTGCKIMVRGKGSMRDKSKESAHRGKANWEHLEDDLHVLVQCEDTENRVHIKLQAALEQVKKLLIPAPEGTDELKRKQLMELAIINGTYRPMKSPNPARVMTAVPLLSPTPLRSSGPVLMSPTPGSGLPSTTFGGSILSPTLTASNLLGSNVFDYSLLSPSMFDSFSSLQLASDLTFPKYPTTTSFVNSFPGLFTSASSFANQTNTNVSPSGASPSASSVNNTSF.

A compositionally biased stretch (polar residues) spans 1 to 10; it reads MPSCTTPTYG. Residues 1–76 are disordered; the sequence is MPSCTTPTYG…RAPPPARLTL (76 aa). Over residues 11 to 31 the composition is skewed to low complexity; sequence VSTQLESQSSESPSRSSVMTP. Residues 135 to 205 are qua1 domain; involved in homodimerization; the sequence is PTATEPIEVE…PEPAGDMISI (71 aa). The KH domain maps to 208–260; the sequence is KIYVPKNEYPDYNFVGRILGPRGMTAKQLEQDTGCKIMVRGKGSMRDKSKESA. The segment at 305-336 is qua2 domain; involved in RNA binding; it reads APEGTDELKRKQLMELAIINGTYRPMKSPNPA. Positions 443–463 are disordered; sequence NTNVSPSGASPSASSVNNTSF. Low complexity predominate over residues 447–457; it reads SPSGASPSASS.

In terms of assembly, homodimer. In terms of processing, phosphorylated by cdk-2 which may negatively regulate its expression in distal mitotic germline cells. Post-translationally, undergoes proteasomal degradation in proximal oocytes following mating. As to expression, expressed in proximal and distal oocytes in female worms but is eliminated from proximal oocytes following mating.

Functionally, RNA-binding protein which recognizes the 5'-UACUCAU-3' RNA consensus sequence. Binds sequences in both the 5'coding and the 3'-UTR region of rme-2 mRNA. Binds sequences in the 3'-UTR region of cye-1 mRNA. Binds to cyb-2.1, cyb-2.2 and cyb-3 mRNA. Binds sequences in the 3'-UTR region of tra-2 mRNA. Binds to the 3' UTR of Notch receptor homolog glp-1, thereby repressing glp-1 translation in the embryo. Binding to the glp-1 3' UTR is inhibited by pos-1 binding to an overlapping binding site in the glp-1 3' UTR. Germ line-specific tumor suppressor essential for oogenesis. Controls the spatial pattern of translation of multiple oogenesis specific mRNAs (e.g. yolk receptor rme-2) by repression of translation during early meiotic prophase (leptotene to pachytene) and then derepression of translation during diplotene/ diakinesis, following its degradation. Also functions to promote the male sexual fate in the hermaphrodite germline but not the male germline. Represses translation of the vacuolar ATPase component vha-13 in the distal gonad. Functions redundantly with gld-2 to promote the initiation of meiotic development and/or inhibit stem cell proliferation. By regulating cye-1 expression, prevents entry into mitosis in meiotic germline cells. This Caenorhabditis elegans protein is Female germline-specific tumor suppressor gld-1 (gld-1).